The sequence spans 322 residues: Acetylglutamate kinase (322 aa).

Residues 89–90 (GG), R111, and N217 each bind substrate.

The protein belongs to the acetylglutamate kinase family. ArgB subfamily.

It localises to the cytoplasm. It catalyses the reaction N-acetyl-L-glutamate + ATP = N-acetyl-L-glutamyl 5-phosphate + ADP. It functions in the pathway amino-acid biosynthesis; L-arginine biosynthesis; N(2)-acetyl-L-ornithine from L-glutamate: step 2/4. Functionally, catalyzes the ATP-dependent phosphorylation of N-acetyl-L-glutamate. The chain is Acetylglutamate kinase from Ehrlichia ruminantium (strain Gardel).